Here is a 185-residue protein sequence, read N- to C-terminus: Probable calcium-binding protein CML10 (185 aa).

The segment at 1–41 (MVKIKMPALFRRRSGSKSPPLPQADPASGGGSPAPTPEEEM) is disordered. EF-hand domains follow at residues 36 to 71 (TPEE…LGHA), 72 to 107 (ATDD…ASGD), 110 to 145 (AVEE…LGEK), and 146 to 181 (ATVQ…GGSF). Ca(2+)-binding residues include aspartate 49, asparagine 51, aspartate 53, arginine 55, glutamate 60, aspartate 85, aspartate 87, aspartate 89, glutamate 96, aspartate 123, aspartate 125, asparagine 127, threonine 129, glutamate 134, aspartate 159, asparagine 161, aspartate 163, and glutamate 170.

Its function is as follows. Potential calcium sensor. The polypeptide is Probable calcium-binding protein CML10 (CML10) (Oryza sativa subsp. japonica (Rice)).